The chain runs to 100 residues: Small ribosomal subunit protein uS14c (100 aa).

Belongs to the universal ribosomal protein uS14 family. As to quaternary structure, part of the 30S ribosomal subunit.

The protein resides in the plastid. It localises to the chloroplast. Functionally, binds 16S rRNA, required for the assembly of 30S particles. The polypeptide is Small ribosomal subunit protein uS14c (Amborella trichopoda).